The chain runs to 150 residues: MTLQLNTIALLLVILLILGVLSNNSTITISAAVLLIMQQTFLSSHIPLLEKYGVKIGIIILTIGVLSPLVSGKIQLPDLSGFLSWKMALSISVGVLVAWLAGKGVPLMGEQPILVTGLLIGTIIGVAFLGGIPVGPLIAAGILALLLGKI.

Helical transmembrane passes span 1-21, 52-72, 81-101, and 123-143; these read MTLQ…LGVL, YGVK…LVSG, GFLS…AWLA, and IIGV…AGIL.

It belongs to the UPF0756 family.

It is found in the cell membrane. The protein is UPF0756 membrane protein HI_1074 of Haemophilus influenzae (strain ATCC 51907 / DSM 11121 / KW20 / Rd).